The following is a 513-amino-acid chain: Light-independent protochlorophyllide reductase subunit B (513 aa).

Aspartate 36 provides a ligand contact to [4Fe-4S] cluster. Catalysis depends on aspartate 299, which acts as the Proton donor. 434–435 lines the substrate pocket; the sequence is GM.

Belongs to the ChlB/BchB/BchZ family. In terms of assembly, protochlorophyllide reductase is composed of three subunits; ChlL, ChlN and ChlB. Forms a heterotetramer of two ChlB and two ChlN subunits. [4Fe-4S] cluster serves as cofactor.

It is found in the plastid. Its subcellular location is the chloroplast. It catalyses the reaction chlorophyllide a + oxidized 2[4Fe-4S]-[ferredoxin] + 2 ADP + 2 phosphate = protochlorophyllide a + reduced 2[4Fe-4S]-[ferredoxin] + 2 ATP + 2 H2O. The protein operates within porphyrin-containing compound metabolism; chlorophyll biosynthesis (light-independent). Component of the dark-operative protochlorophyllide reductase (DPOR) that uses Mg-ATP and reduced ferredoxin to reduce ring D of protochlorophyllide (Pchlide) to form chlorophyllide a (Chlide). This reaction is light-independent. The NB-protein (ChlN-ChlB) is the catalytic component of the complex. This is Light-independent protochlorophyllide reductase subunit B from Chaetosphaeridium globosum (Charophycean green alga).